Reading from the N-terminus, the 294-residue chain is Mitochondrial glycine transporter (294 aa).

3 Solcar repeats span residues 5 to 84 (RRAT…IRQA), 102 to 186 (LNMY…MKVL), and 208 to 292 (ASTL…IVKK). The next 6 helical transmembrane spans lie at 11–36 (LIGGFSGGLVSAIILQPFDLLKTRLQ), 59–85 (GALPSCIRTSVGSAMYLTMLNSIRQAI), 108–133 (MFSGAVTRALTGLITMPITVIKVRYE), 161–184 (GFGATALRDAPYAGLYMLFYDRMK), 212–238 (INGSSAFSAAVIATSITAPFDTVKTRM), and 267–285 (GISLRLTRKAFSAGIAWGI).

This sequence belongs to the mitochondrial carrier (TC 2.A.29) family. SLC25A38 subfamily.

Its subcellular location is the mitochondrion inner membrane. The catalysed reaction is glycine(in) = glycine(out). Mitochondrial glycine transporter that imports glycine into the mitochondrial matrix. Plays an important role in providing glycine for the first enzymatic step in heme biosynthesis, the condensation of glycine with succinyl-CoA to produce 5-aminolevulinate (ALA) in the mitochondrial matrix. The protein is Mitochondrial glycine transporter of Kluyveromyces lactis (strain ATCC 8585 / CBS 2359 / DSM 70799 / NBRC 1267 / NRRL Y-1140 / WM37) (Yeast).